Here is a 565-residue protein sequence, read N- to C-terminus: uncharacterized protein (565 aa).

This is an uncharacterized protein from Acanthamoeba polyphaga (Amoeba).